Reading from the N-terminus, the 220-residue chain is MFTVALAKGALLQESVSMFSDVGLDFSAVLDDSNRQLMVPSACGRAKALLVRNSDVPVYVSYGQAQLGIVGFDVLQEQKLQVSNLVDLGFGECHMSVAVKSSSGYLSASDLPPNCRVASKFTNCAKHFFDQIDLPVQLVHLSGSVELGPITGMAEAIVDLVATGRTLRDNGLVEIEELFKSSARLVGHPLSLRLDKGPLQEIIDSIQIQSQTNLLSDGKK.

Belongs to the ATP phosphoribosyltransferase family. Short subfamily. In terms of assembly, heteromultimer composed of HisG and HisZ subunits.

The protein localises to the cytoplasm. The enzyme catalyses 1-(5-phospho-beta-D-ribosyl)-ATP + diphosphate = 5-phospho-alpha-D-ribose 1-diphosphate + ATP. Its pathway is amino-acid biosynthesis; L-histidine biosynthesis; L-histidine from 5-phospho-alpha-D-ribose 1-diphosphate: step 1/9. Its function is as follows. Catalyzes the condensation of ATP and 5-phosphoribose 1-diphosphate to form N'-(5'-phosphoribosyl)-ATP (PR-ATP). Has a crucial role in the pathway because the rate of histidine biosynthesis seems to be controlled primarily by regulation of HisG enzymatic activity. This chain is ATP phosphoribosyltransferase, found in Prochlorococcus marinus (strain NATL1A).